We begin with the raw amino-acid sequence, 602 residues long: Glutaminase liver isoform, mitochondrial (602 aa).

The transit peptide at 1-14 (MRSMRALQNALSRA) directs the protein to the mitochondrion. 2 disordered regions span residues 1–29 (MRSM…PSRG) and 45–66 (AQGR…ASHS). Serine 219 contributes to the substrate binding site. An N6-succinyllysine modification is found at lysine 253. Residue asparagine 268 participates in substrate binding. An N6-acetyllysine mark is found at lysine 279 and lysine 284. Positions 314 and 321 each coordinate substrate. An N6-acetyllysine modification is found at lysine 329. Positions 347, 399, and 417 each coordinate substrate. ANK repeat units follow at residues 518–551 (DSRT…VKDR) and 552–585 (WGNI…SETQ).

It belongs to the glutaminase family. As to quaternary structure, homotetramer, dimer of dimers. Does not assemble into higher oligomers. Interacts with the PDZ domain of the syntrophin SNTA1. Interacts with the PDZ domain of TAX1BP3.

It is found in the mitochondrion. It catalyses the reaction L-glutamine + H2O = L-glutamate + NH4(+). With respect to regulation, enzyme activity is not stimulated by phosphate. Phosphate increases kcat, but decreases substrate affinity, resulting in unchanged enzyme activity. Functionally, plays an important role in the regulation of glutamine catabolism. Promotes mitochondrial respiration and increases ATP generation in cells by catalyzing the synthesis of glutamate and alpha-ketoglutarate. Increases cellular anti-oxidant function via NADH and glutathione production. May play a role in preventing tumor proliferation. This chain is Glutaminase liver isoform, mitochondrial (Gls2), found in Mus musculus (Mouse).